The primary structure comprises 506 residues: Maturase K (506 aa).

The protein belongs to the intron maturase 2 family. MatK subfamily.

Its subcellular location is the plastid. The protein localises to the chloroplast. Functionally, usually encoded in the trnK tRNA gene intron. Probably assists in splicing its own and other chloroplast group II introns. The protein is Maturase K of Uncarina grandidieri (Mouse trap tree).